The following is a 99-amino-acid chain: PLAGFFSKLFVFTACLQSSLYFLTFIGILLSGITAFYYIQIIKIIYFGRLNFWSIYIPIDKSNAVMISITTLLLILFFADNSIFITSNLVSLNIFHFLK.

Helical transmembrane passes span 22–42 (FLTF…IQII) and 65–85 (VMIS…SIFI).

This sequence belongs to the complex I subunit 2 family.

Its subcellular location is the mitochondrion inner membrane. The catalysed reaction is a ubiquinone + NADH + 5 H(+)(in) = a ubiquinol + NAD(+) + 4 H(+)(out). In terms of biological role, core subunit of the mitochondrial membrane respiratory chain NADH dehydrogenase (Complex I) that is believed to belong to the minimal assembly required for catalysis. Complex I functions in the transfer of electrons from NADH to the respiratory chain. The immediate electron acceptor for the enzyme is believed to be ubiquinone. The polypeptide is NADH-ubiquinone oxidoreductase chain 2 (ND2) (Cyanidium caldarium (Red alga)).